A 138-amino-acid chain; its full sequence is Protein NrdI (138 aa).

The protein belongs to the NrdI family.

In terms of biological role, probably involved in ribonucleotide reductase function. This is Protein NrdI from Mycobacterium leprae (strain TN).